The chain runs to 471 residues: Cysteine--tRNA ligase (471 aa).

Residue Cys29 participates in Zn(2+) binding. Positions 31–41 match the 'HIGH' region motif; sequence PTVYNYIHIGN. Zn(2+) is bound by residues Cys209, His234, and Glu238. Residues 266–270 carry the 'KMSKS' region motif; the sequence is KMSKS. Lys269 provides a ligand contact to ATP.

Belongs to the class-I aminoacyl-tRNA synthetase family. In terms of assembly, monomer. Zn(2+) is required as a cofactor.

The protein resides in the cytoplasm. The catalysed reaction is tRNA(Cys) + L-cysteine + ATP = L-cysteinyl-tRNA(Cys) + AMP + diphosphate. This is Cysteine--tRNA ligase from Listeria welshimeri serovar 6b (strain ATCC 35897 / DSM 20650 / CCUG 15529 / CIP 8149 / NCTC 11857 / SLCC 5334 / V8).